A 240-amino-acid chain; its full sequence is Tubulin alpha chain (240 aa).

Asparagine 17 provides a ligand contact to GTP. Glutamate 43 is a catalytic residue.

It belongs to the tubulin family. In terms of assembly, dimer of alpha and beta chains. A typical microtubule is a hollow water-filled tube with an outer diameter of 25 nm and an inner diameter of 15 nM. Alpha-beta heterodimers associate head-to-tail to form protofilaments running lengthwise along the microtubule wall with the beta-tubulin subunit facing the microtubule plus end conferring a structural polarity. Microtubules usually have 13 protofilaments but different protofilament numbers can be found in some organisms and specialized cells. Mg(2+) is required as a cofactor. Undergoes a tyrosination/detyrosination cycle, the cyclic removal and re-addition of a C-terminal tyrosine residue by the enzymes tubulin tyrosine carboxypeptidase (TTCP) and tubulin tyrosine ligase (TTL), respectively.

Its subcellular location is the cytoplasm. It is found in the cytoskeleton. The enzyme catalyses GTP + H2O = GDP + phosphate + H(+). Its function is as follows. Tubulin is the major constituent of microtubules, a cylinder consisting of laterally associated linear protofilaments composed of alpha- and beta-tubulin heterodimers. Microtubules grow by the addition of GTP-tubulin dimers to the microtubule end, where a stabilizing cap forms. Below the cap, tubulin dimers are in GDP-bound state, owing to GTPase activity of alpha-tubulin. This chain is Tubulin alpha chain, found in Octopus vulgaris (Common octopus).